The chain runs to 118 residues: uncharacterized protein (118 aa).

A helical transmembrane segment spans residues 95-115 (IIINLVIILAMYAPEIIGKLL).

Belongs to the M.jannaschii MJ0023/MJ0349/MJ1072/MJ1074/MJ1107/MJECL16 family.

The protein resides in the membrane. This is an uncharacterized protein from Methanocaldococcus jannaschii (strain ATCC 43067 / DSM 2661 / JAL-1 / JCM 10045 / NBRC 100440) (Methanococcus jannaschii).